The chain runs to 89 residues: Small ribosomal subunit protein uS14A (89 aa).

It belongs to the universal ribosomal protein uS14 family. Part of the 30S ribosomal subunit. Contacts proteins S3 and S10.

Binds 16S rRNA, required for the assembly of 30S particles and may also be responsible for determining the conformation of the 16S rRNA at the A site. The chain is Small ribosomal subunit protein uS14A from Listeria welshimeri serovar 6b (strain ATCC 35897 / DSM 20650 / CCUG 15529 / CIP 8149 / NCTC 11857 / SLCC 5334 / V8).